A 187-amino-acid chain; its full sequence is Transmembrane protein 17A (187 aa).

The next 4 membrane-spanning stretches (helical) occupy residues 49–69 (IFLY…VIML), 82–102 (FILV…LYLG), 114–134 (LAGF…FLLC), and 146–166 (AVHG…IFAL).

It belongs to the TMEM17 family. Part of the tectonic-like complex (also named B9 complex).

It localises to the cell projection. The protein localises to the cilium membrane. Its function is as follows. Transmembrane component of the tectonic-like complex, a complex localized at the transition zone of primary cilia and acting as a barrier that prevents diffusion of transmembrane proteins between the cilia and plasma membranes. Required for ciliogenesis and sonic hedgehog/SHH signaling. In Xenopus tropicalis (Western clawed frog), this protein is Transmembrane protein 17A (tmem17-a).